The following is a 353-amino-acid chain: Guanine nucleotide-binding protein G(q) subunit alpha (353 aa).

Residues C3 and C4 are each lipidated (S-palmitoyl cysteine). The G-alpha domain occupies R32–V353. The segment at K35–T48 is G1 motif. Residues G40–S47, L174–T180, D199–Q203, N268–D271, and A325 contribute to the GTP site. Residues S47 and T180 each coordinate Mg(2+). The segment at D172 to T180 is G2 motif. Residues F195 to R204 form a G3 motif region. Residues I264–D271 are G4 motif. The interval T323–T328 is G5 motif.

It belongs to the G-alpha family. G(q) subfamily. In terms of assembly, g proteins are composed of 3 units; alpha, beta and gamma. The alpha chain contains the guanine nucleotide binding site.

Guanine nucleotide-binding proteins (G proteins) are involved as modulators or transducers in various transmembrane signaling systems. The protein is Guanine nucleotide-binding protein G(q) subunit alpha of Homarus americanus (American lobster).